Consider the following 399-residue polypeptide: Glucose-1-phosphate adenylyltransferase (399 aa).

Residues Y100, G165, 180–181 (EK), and S191 contribute to the alpha-D-glucose 1-phosphate site.

This sequence belongs to the bacterial/plant glucose-1-phosphate adenylyltransferase family. Homotetramer.

It carries out the reaction alpha-D-glucose 1-phosphate + ATP + H(+) = ADP-alpha-D-glucose + diphosphate. It functions in the pathway glycan biosynthesis; glycogen biosynthesis. Its function is as follows. Involved in the biosynthesis of ADP-glucose, a building block required for the elongation reactions to produce glycogen. Catalyzes the reaction between ATP and alpha-D-glucose 1-phosphate (G1P) to produce pyrophosphate and ADP-Glc. The chain is Glucose-1-phosphate adenylyltransferase from Desulforamulus reducens (strain ATCC BAA-1160 / DSM 100696 / MI-1) (Desulfotomaculum reducens).